The following is a 726-amino-acid chain: tRNA endonuclease ANKZF1 (726 aa).

The segment at 40 to 61 (LARAPRTSCSGSGERESPERKL) is disordered. A compositionally biased stretch (basic and acidic residues) spans 52-61 (GERESPERKL). Residues 72-96 (LFCSTCDQTFQNHQEQREHYKLDWH) form a C2H2-type zinc finger. Residues 120-130 (STGDLSSISGS) show a composition bias toward low complexity. A disordered region spans residues 120 to 141 (STGDLSSISGSEDSDSASEEDL). The span at 131–141 (EDSDSASEEDL) shows a compositional bias: acidic residues. Positions 203–346 (GPRDCVVLMA…QRVLHKLTTL (144 aa)) constitute a VLRF1 domain. Residue Q246 is part of the active site. 3 positions are modified to phosphoserine: S258, S361, and S398. Disordered regions lie at residues 387-409 (DEKE…EGED) and 436-474 (RRRR…SSQA). Residues 436–445 (RRRRKRNKKE) are compositionally biased toward basic residues. Positions 457–473 (TLLQQTQEEEPSTQSSQ) are enriched in low complexity. An ANK 1 repeat occupies 493–526 (ELWNALLAACRAGDVGVLKLQLAPSPADPRVLSL). S533 carries the phosphoserine modification. The stretch at 534-563 (GGFTLLHAAAAAGRGSVVRLLLEAGADPTV) is one ANK 2 repeat. The tract at residues 588-656 (MEKNPDAYDY…RRFAALSDRE (69 aa)) is disordered. T607 carries the phosphothreonine modification. Residues 609–659 (EMEARQATRKREQKAARRQREEQQQRQQEQEEREREEQRRFAALSDREKRA) are a coiled coil. Residues 610–656 (MEARQATRKREQKAARRQREEQQQRQQEQEEREREEQRRFAALSDRE) show a composition bias toward basic and acidic residues. A VCP/p97-interacting motif (VIM) region spans residues 654-666 (DREKRALAAERRL). S675 and S680 each carry phosphoserine.

The protein belongs to the ANKZF1/VMS1 family. Interacts (via VIM motif) with VCP.

The protein resides in the cytoplasm. In terms of biological role, endonuclease that cleaves polypeptidyl-tRNAs downstream of the ribosome-associated quality control (RQC) pathway to release incompletely synthesized polypeptides for degradation. The RQC pathway disassembles aberrantly stalled translation complexes to recycle or degrade the constituent parts. ANKZF1 acts downstream disassembly of stalled ribosomes and specifically cleaves off the terminal 3'-CCA nucleotides universal to all tRNAs from polypeptidyl-tRNAs, releasing (1) ubiquitinated polypeptides from 60S ribosomal subunit for degradation and (2) cleaved tRNAs. ANKZF1-cleaved tRNAs are then repaired and recycled by ELAC1 and TRNT1. Also plays a role in the cellular response to hydrogen peroxide and in the maintenance of mitochondrial integrity under conditions of cellular stress. The polypeptide is tRNA endonuclease ANKZF1 (Homo sapiens (Human)).